We begin with the raw amino-acid sequence, 251 residues long: NLP effector protein Pc129485 (251 aa).

The signal sequence occupies residues 1-19 (MNFRIVLLVLVASLAGAQA). The short motif at 127–133 (GHRHNWE) is the Hepta-peptide GHRHDWE motif element. 2 N-linked (GlcNAc...) asparagine glycosylation sites follow: N146 and N218.

The protein belongs to the Necrosis inducing protein (NPP1) family.

It localises to the secreted. Functionally, secreted effector that contributes strongly to virulence during infection by P.capsici. The protein is NLP effector protein Pc129485 of Phytophthora capsici.